A 196-amino-acid chain; its full sequence is UPF0134 protein MPN_501 (196 aa).

Belongs to the UPF0134 family.

The polypeptide is UPF0134 protein MPN_501 (Mycoplasma pneumoniae (strain ATCC 29342 / M129 / Subtype 1) (Mycoplasmoides pneumoniae)).